A 213-amino-acid polypeptide reads, in one-letter code: Uracil phosphoribosyltransferase (213 aa).

Residues Arg-78, Arg-103, and 130-138 (DPMLATGGS) contribute to the 5-phospho-alpha-D-ribose 1-diphosphate site. Uracil-binding positions include Ile-197 and 202–204 (GDA). A 5-phospho-alpha-D-ribose 1-diphosphate-binding site is contributed by Asp-203.

This sequence belongs to the UPRTase family. Requires Mg(2+) as cofactor.

The enzyme catalyses UMP + diphosphate = 5-phospho-alpha-D-ribose 1-diphosphate + uracil. It functions in the pathway pyrimidine metabolism; UMP biosynthesis via salvage pathway; UMP from uracil: step 1/1. With respect to regulation, allosterically activated by GTP. Its function is as follows. Catalyzes the conversion of uracil and 5-phospho-alpha-D-ribose 1-diphosphate (PRPP) to UMP and diphosphate. This chain is Uracil phosphoribosyltransferase, found in Cutibacterium acnes (strain DSM 16379 / KPA171202) (Propionibacterium acnes).